The primary structure comprises 784 residues: Serine/threonine-protein kinase DCLK2 (784 aa).

The tract at residues 1-45 (MASTRSIELEHFEERDKRPRPGSRRGAPSSSGGSSSSGPKGNGLI) is disordered. Residues 7 to 19 (IELEHFEERDKRP) are compositionally biased toward basic and acidic residues. Positions 24 to 39 (RRGAPSSSGGSSSSGP) are enriched in low complexity. The residue at position 61 (T61) is a Phosphothreonine. 2 Doublecortin domains span residues 72–158 (KKAR…VDYT) and 197–280 (KLVT…AQDD). 2 stretches are compositionally biased toward low complexity: residues 300–312 (AVKYSGSKSPGPS) and 341–364 (TPSSQLSTPKSTKSSSSSPTSPGS). The disordered stretch occupies residues 300–368 (AVKYSGSKSP…PTSPGSFRGL (69 aa)). The residue at position 379 (S379) is a Phosphoserine. A Protein kinase domain is found at 411–668 (YKIGKVIGDG…AGEILSHPWV (258 aa)). ATP-binding positions include 417–425 (IGDGNFAVV) and K440. D532 functions as the Proton acceptor in the catalytic mechanism. At S664 the chain carries Phosphoserine. T683 is subject to Phosphothreonine. The segment at 724-784 (CQDSSRPGME…RAGTWRRHRD (61 aa)) is disordered. The segment covering 741 to 758 (SASAEEPPVSAPAAAPAP) has biased composition (low complexity).

It belongs to the protein kinase superfamily. CAMK Ser/Thr protein kinase family. CaMK subfamily. Binds to and stabilizes microtubules. Interacts with MAPK8IP1/JIP-1, MAPK8IP2/JIP-2, MAPK9/JNK2, PPP1R9B/NEURABIN-2 and actin. In terms of processing, autophosphorylated.

The protein resides in the cytoplasm. Its subcellular location is the cytoskeleton. The enzyme catalyses L-seryl-[protein] + ATP = O-phospho-L-seryl-[protein] + ADP + H(+). It carries out the reaction L-threonyl-[protein] + ATP = O-phospho-L-threonyl-[protein] + ADP + H(+). Its function is as follows. Protein kinase with a significantly reduced Ca(2+)/CAM affinity and dependence compared to other members of the CaMK family. May play a role in the down-regulation of CRE-dependent gene activation probably by phosphorylation of the CREB coactivator CRTC2/TORC2 and the resulting retention of TORC2 in the cytoplasm. This is Serine/threonine-protein kinase DCLK2 (DCLK2) from Ailuropoda melanoleuca (Giant panda).